The following is an 864-amino-acid chain: Probable M1 family aminopeptidase 1 (864 aa).

Substrate contacts are provided by residues E149 and 289–293; that span reads GAMEN. H325 provides a ligand contact to Zn(2+). E326 (proton acceptor) is an active-site residue. Zn(2+) contacts are provided by H329 and E348.

It belongs to the peptidase M1 family. Zn(2+) is required as a cofactor.

The sequence is that of Probable M1 family aminopeptidase 1 from Encephalitozoon cuniculi (strain GB-M1) (Microsporidian parasite).